We begin with the raw amino-acid sequence, 145 residues long: Peptide methionine sulfoxide reductase MsrB (145 aa).

Residues 6–129 (KNERLKQLTD…NSAALRFIPV (124 aa)) form the MsrB domain. Cys-118 functions as the Nucleophile in the catalytic mechanism.

Belongs to the MsrB Met sulfoxide reductase family.

The catalysed reaction is L-methionyl-[protein] + [thioredoxin]-disulfide + H2O = L-methionyl-(R)-S-oxide-[protein] + [thioredoxin]-dithiol. The sequence is that of Peptide methionine sulfoxide reductase MsrB from Listeria innocua serovar 6a (strain ATCC BAA-680 / CLIP 11262).